We begin with the raw amino-acid sequence, 398 residues long: MDLFEYQARDLFETHGVPVLKGIVASTPEAARKAAEEIGGLTVVKAQVKVGGRGKAGGVRVAPTSAQAFDAADAILGMDIKGHTVNQVMVAQGADIAEEYYFSILLDRANRSYLAMCSVEGGMEIEILAKEKPEALAKVEVDPLTGIDEDKAREIVTAAGFETEVAEKVIPVLIKIWQVYYEEEATLVEVNPLVLTDDGDVIALDGKITLDDNADFRHDNRGALAESAGGLDILELKAKKNDLNYVKLDGSVGIIGNGAGLVMSTLDIVAAAGERHGGQRPANFLDIGGGASAESMAAGLDVILGDSQVRSVFVNVFGGITACDVVAKGIVGALDVLGDQATKPLVVRLDGNNVVEGRRILAEYNHPLVTVVEGMDAAADHAAHLANLAQHGQFATAN.

One can recognise an ATP-grasp domain in the interval 9 to 237; that stretch reads RDLFETHGVP…AGGLDILELK (229 aa). ATP is bound by residues K45, 52–54, A94, and E99; that span reads GRG. Mg(2+)-binding residues include N191 and D205. Residues N257 and 319-321 each bind substrate; that span reads GIT.

The protein belongs to the succinate/malate CoA ligase beta subunit family. In terms of assembly, heterotetramer of two alpha and two beta subunits. The cofactor is Mg(2+).

The enzyme catalyses succinate + ATP + CoA = succinyl-CoA + ADP + phosphate. The catalysed reaction is GTP + succinate + CoA = succinyl-CoA + GDP + phosphate. It participates in carbohydrate metabolism; tricarboxylic acid cycle; succinate from succinyl-CoA (ligase route): step 1/1. Succinyl-CoA synthetase functions in the citric acid cycle (TCA), coupling the hydrolysis of succinyl-CoA to the synthesis of either ATP or GTP and thus represents the only step of substrate-level phosphorylation in the TCA. The beta subunit provides nucleotide specificity of the enzyme and binds the substrate succinate, while the binding sites for coenzyme A and phosphate are found in the alpha subunit. The protein is Succinate--CoA ligase [ADP-forming] subunit beta of Corynebacterium glutamicum (strain ATCC 13032 / DSM 20300 / JCM 1318 / BCRC 11384 / CCUG 27702 / LMG 3730 / NBRC 12168 / NCIMB 10025 / NRRL B-2784 / 534).